A 295-amino-acid chain; its full sequence is Ethanolamine ammonia-lyase small subunit (295 aa).

The adenosylcob(III)alamin site is built by Val-207, Glu-228, and Cys-258.

Belongs to the EutC family. In terms of assembly, the basic unit is a heterodimer which dimerizes to form tetramers. The heterotetramers trimerize; 6 large subunits form a core ring with 6 small subunits projecting outwards. Adenosylcob(III)alamin serves as cofactor.

It localises to the bacterial microcompartment. It carries out the reaction ethanolamine = acetaldehyde + NH4(+). Its pathway is amine and polyamine degradation; ethanolamine degradation. Functionally, catalyzes the deamination of various vicinal amino-alcohols to oxo compounds. Allows this organism to utilize ethanolamine as the sole source of nitrogen and carbon in the presence of external vitamin B12. This is Ethanolamine ammonia-lyase small subunit from Escherichia coli O81 (strain ED1a).